The sequence spans 270 residues: Phosphatidylglycerol--prolipoprotein diacylglyceryl transferase (270 aa).

The next 4 membrane-spanning stretches (helical) occupy residues 18-38 (IAVH…LWLA), 55-75 (LVLF…VIFQ), 89-109 (IWNG…TGII), and 115-135 (GLSF…GQAI). Arginine 137 is a binding site for a 1,2-diacyl-sn-glycero-3-phospho-(1'-sn-glycerol). The next 3 membrane-spanning stretches (helical) occupy residues 177–197 (QPTF…LLLL), 205–225 (GELF…IEGL), and 236–256 (LRIA…LIAY).

This sequence belongs to the Lgt family.

The protein localises to the cell membrane. It catalyses the reaction L-cysteinyl-[prolipoprotein] + a 1,2-diacyl-sn-glycero-3-phospho-(1'-sn-glycerol) = an S-1,2-diacyl-sn-glyceryl-L-cysteinyl-[prolipoprotein] + sn-glycerol 1-phosphate + H(+). It functions in the pathway protein modification; lipoprotein biosynthesis (diacylglyceryl transfer). Catalyzes the transfer of the diacylglyceryl group from phosphatidylglycerol to the sulfhydryl group of the N-terminal cysteine of a prolipoprotein, the first step in the formation of mature lipoproteins. This is Phosphatidylglycerol--prolipoprotein diacylglyceryl transferase from Bacillus licheniformis (strain ATCC 14580 / DSM 13 / JCM 2505 / CCUG 7422 / NBRC 12200 / NCIMB 9375 / NCTC 10341 / NRRL NRS-1264 / Gibson 46).